Here is a 634-residue protein sequence, read N- to C-terminus: tRNA uridine 5-carboxymethylaminomethyl modification enzyme MnmG (634 aa).

13–18 (GAGHAG) is an FAD binding site. NAD(+) is bound at residue 273–287 (GPRYCPSIEDKIIKF).

The protein belongs to the MnmG family. In terms of assembly, homodimer. Heterotetramer of two MnmE and two MnmG subunits. Requires FAD as cofactor.

It localises to the cytoplasm. In terms of biological role, NAD-binding protein involved in the addition of a carboxymethylaminomethyl (cmnm) group at the wobble position (U34) of certain tRNAs, forming tRNA-cmnm(5)s(2)U34. This Buchnera aphidicola subsp. Cinara cedri (strain Cc) protein is tRNA uridine 5-carboxymethylaminomethyl modification enzyme MnmG.